A 231-amino-acid chain; its full sequence is Large ribosomal subunit protein uL1 (231 aa).

It belongs to the universal ribosomal protein uL1 family. Part of the 50S ribosomal subunit.

Its function is as follows. Binds directly to 23S rRNA. The L1 stalk is quite mobile in the ribosome, and is involved in E site tRNA release. Protein L1 is also a translational repressor protein, it controls the translation of the L11 operon by binding to its mRNA. This is Large ribosomal subunit protein uL1 from Teredinibacter turnerae (strain ATCC 39867 / T7901).